A 247-amino-acid chain; its full sequence is PF03932 family protein CutC (247 aa).

This sequence belongs to the CutC family.

The protein localises to the cytoplasm. This is PF03932 family protein CutC from Vibrio parahaemolyticus serotype O3:K6 (strain RIMD 2210633).